Reading from the N-terminus, the 342-residue chain is 4-hydroxythreonine-4-phosphate dehydrogenase (342 aa).

Histidine 140 and threonine 141 together coordinate substrate. Residues histidine 175, histidine 220, and histidine 275 each coordinate a divalent metal cation. Substrate-binding residues include lysine 283, asparagine 292, and arginine 301.

This sequence belongs to the PdxA family. In terms of assembly, homodimer. Requires Zn(2+) as cofactor. The cofactor is Mg(2+). It depends on Co(2+) as a cofactor.

Its subcellular location is the cytoplasm. The catalysed reaction is 4-(phosphooxy)-L-threonine + NAD(+) = 3-amino-2-oxopropyl phosphate + CO2 + NADH. The protein operates within cofactor biosynthesis; pyridoxine 5'-phosphate biosynthesis; pyridoxine 5'-phosphate from D-erythrose 4-phosphate: step 4/5. Catalyzes the NAD(P)-dependent oxidation of 4-(phosphooxy)-L-threonine (HTP) into 2-amino-3-oxo-4-(phosphooxy)butyric acid which spontaneously decarboxylates to form 3-amino-2-oxopropyl phosphate (AHAP). The sequence is that of 4-hydroxythreonine-4-phosphate dehydrogenase from Rhizobium meliloti (strain 1021) (Ensifer meliloti).